Reading from the N-terminus, the 232-residue chain is Sugar fermentation stimulation protein homolog (232 aa).

Belongs to the SfsA family.

The chain is Sugar fermentation stimulation protein homolog from Ruegeria sp. (strain TM1040) (Silicibacter sp.).